We begin with the raw amino-acid sequence, 566 residues long: MDIKRIILYVIVALLAIALFNAWQRDYPPTPKPTPTVEQPTANGDHPTAYTPPAFTPGAAEKTKKAGTIALTSKVPEARLITVRTDVLDVEIDTQGGNIVSAKLPKYPVSLEEKQTPVQILSGEPNELYVAQSGLTNGNGQPTTVQFESAKKQYVLENGQNQLIVQLTGRAPDGLLVTKTYTFHRDDYAIHLAYQVKNNTSKPWQGSLYTQITRRQPPTEHHHFYVRSYNGASMGSPQTPYEKLSYESLDKQNIDRTSQSGWIAMQQHYFLSAWVPGNPELTYHYYSHVIPASGEPNVYVVGFVSPQMNVAAGSEAATHATLYVGPEIAKRLKGLAPGLERTIDYGWLWPISMLLFWILSSVHAVVKNWGWSIIITTILIKIVFYWFSAKSFRSMARMREMQPRIQALKERHGDDRQALSRATMELYRKEKINPLGGCLPMLIQVPVFIAFYYVIIESVQLRQAPFIFWIHDLSVKDPYYILPIIMGLSMLAQQWLSPTSPDPTQQKMMWILPVIFTVFFINFPAGLVLYWITNNVVQTLQQWYVNKTYESHKAKLKARRARKRKR.

A run of 5 helical transmembrane segments spans residues 3-23 (IKRIILYVIVALLAIALFNAW), 346-366 (GWLWPISMLLFWILSSVHAVV), 369-389 (WGWSIIITTILIKIVFYWFSA), 436-456 (GGCLPMLIQVPVFIAFYYVII), and 509-529 (MWILPVIFTVFFINFPAGLVL).

It belongs to the OXA1/ALB3/YidC family. Type 1 subfamily. Interacts with the Sec translocase complex via SecD. Specifically interacts with transmembrane segments of nascent integral membrane proteins during membrane integration.

The protein resides in the cell inner membrane. Required for the insertion and/or proper folding and/or complex formation of integral membrane proteins into the membrane. Involved in integration of membrane proteins that insert both dependently and independently of the Sec translocase complex, as well as at least some lipoproteins. Aids folding of multispanning membrane proteins. The sequence is that of Membrane protein insertase YidC from Coxiella burnetii (strain Dugway 5J108-111).